A 936-amino-acid polypeptide reads, in one-letter code: E3 ubiquitin-protein ligase ZNRF3 (936 aa).

The interval 1 to 31 (MRPRSGGRPGATGRRRRRLRRRPRGLRCSRL) is disordered. Residues 1–55 (MRPRSGGRPGATGRRRRRLRRRPRGLRCSRLPPPPPLPLLLGLLLAAAGPGAARA) form the signal peptide. Residues 13-27 (GRRRRRLRRRPRGLR) are compositionally biased toward basic residues. Residues 56-219 (KETAFVEVVL…PRQPTEYFDM (164 aa)) lie on the Extracellular side of the membrane. Residues 220–240 (GIFLAFFVVVSLVCLILLVKI) traverse the membrane as a helical segment. Topologically, residues 241–936 (KLKQRRSQNS…HSADSSSPGA (696 aa)) are cytoplasmic. The segment at 293 to 334 (CAICLEKYIDGEELRVIPCTHRFHRKCVDPWLLQHHTCPHCR) adopts an RING-type; atypical zinc-finger fold. Disordered stretches follow at residues 608–693 (SEAG…SPGA), 739–758 (LYEG…SQGL), 849–875 (THSL…ATRE), and 892–936 (CPPE…SPGA). The span at 654–684 (SGDQVSTCSLEMNYSSNSSLEHRGPNSSTSE) shows a compositional bias: polar residues. Residues 913–922 (ESSTTATEAA) are compositionally biased toward low complexity.

Belongs to the ZNRF3 family. Interacts with LRP6, FZD4, FZD5, FZD6 and FZD8. Interacts with RSPO1; interaction promotes indirect interaction with LGR4 and membrane clearance of ZNRF3. Also interacts with RSPO2. Interacts with LMBR1L.

The protein localises to the cell membrane. It carries out the reaction S-ubiquitinyl-[E2 ubiquitin-conjugating enzyme]-L-cysteine + [acceptor protein]-L-lysine = [E2 ubiquitin-conjugating enzyme]-L-cysteine + N(6)-ubiquitinyl-[acceptor protein]-L-lysine.. It participates in protein modification; protein ubiquitination. Its activity is regulated as follows. Negatively regulated by R-spondin proteins such as RSPO1: interaction with RSPO1 induces the indirect association between ZNRF3 and LGR4, promoting membrane clearance of ZNRF3. In terms of biological role, E3 ubiquitin-protein ligase that acts as a negative regulator of the Wnt signaling pathway by mediating the ubiquitination and subsequent degradation of Wnt receptor complex components Frizzled and LRP6. Acts on both canonical and non-canonical Wnt signaling pathway. Acts as a tumor suppressor in the intestinal stem cell zone by inhibiting the Wnt signaling pathway, thereby restricting the size of the intestinal stem cell zone. Along with RSPO2 and RNF43, constitutes a master switch that governs limb specification. This Homo sapiens (Human) protein is E3 ubiquitin-protein ligase ZNRF3 (ZNRF3).